Reading from the N-terminus, the 222-residue chain is Phosphoribosylformylglycinamidine synthase subunit PurQ (222 aa).

The 221-residue stretch at 2–222 (KAAVITFPGS…RALLGGMALV (221 aa)) folds into the Glutamine amidotransferase type-1 domain. Cys-86 (nucleophile) is an active-site residue. Active-site residues include His-194 and Glu-196.

As to quaternary structure, part of the FGAM synthase complex composed of 1 PurL, 1 PurQ and 2 PurS subunits.

It is found in the cytoplasm. The catalysed reaction is N(2)-formyl-N(1)-(5-phospho-beta-D-ribosyl)glycinamide + L-glutamine + ATP + H2O = 2-formamido-N(1)-(5-O-phospho-beta-D-ribosyl)acetamidine + L-glutamate + ADP + phosphate + H(+). The enzyme catalyses L-glutamine + H2O = L-glutamate + NH4(+). It participates in purine metabolism; IMP biosynthesis via de novo pathway; 5-amino-1-(5-phospho-D-ribosyl)imidazole from N(2)-formyl-N(1)-(5-phospho-D-ribosyl)glycinamide: step 1/2. Its function is as follows. Part of the phosphoribosylformylglycinamidine synthase complex involved in the purines biosynthetic pathway. Catalyzes the ATP-dependent conversion of formylglycinamide ribonucleotide (FGAR) and glutamine to yield formylglycinamidine ribonucleotide (FGAM) and glutamate. The FGAM synthase complex is composed of three subunits. PurQ produces an ammonia molecule by converting glutamine to glutamate. PurL transfers the ammonia molecule to FGAR to form FGAM in an ATP-dependent manner. PurS interacts with PurQ and PurL and is thought to assist in the transfer of the ammonia molecule from PurQ to PurL. This Cereibacter sphaeroides (strain ATCC 17023 / DSM 158 / JCM 6121 / CCUG 31486 / LMG 2827 / NBRC 12203 / NCIMB 8253 / ATH 2.4.1.) (Rhodobacter sphaeroides) protein is Phosphoribosylformylglycinamidine synthase subunit PurQ.